A 588-amino-acid chain; its full sequence is UvrABC system protein C (588 aa).

The GIY-YIG domain maps to 12 to 89 (SKPGCYLYLN…IKKYRPKYNV (78 aa)). A UVR domain is found at 194–229 (NEVKTLLTNQMHKAAENLQFEEAQRIKEQIISLDFT).

It belongs to the UvrC family. As to quaternary structure, interacts with UvrB in an incision complex.

The protein resides in the cytoplasm. Its function is as follows. The UvrABC repair system catalyzes the recognition and processing of DNA lesions. UvrC both incises the 5' and 3' sides of the lesion. The N-terminal half is responsible for the 3' incision and the C-terminal half is responsible for the 5' incision. In Mesoplasma florum (strain ATCC 33453 / NBRC 100688 / NCTC 11704 / L1) (Acholeplasma florum), this protein is UvrABC system protein C.